A 778-amino-acid chain; its full sequence is uncharacterized protein (778 aa).

Composition is skewed to polar residues over residues 1-11, 18-34, and 41-51; these read MPISSPGTRCS, TLQQ…QSLG, and GSITENYVQDS. Residues 1–60 are disordered; the sequence is MPISSPGTRCSSDLKDPTLQQYSAESVSTEQSLGTFEESKGSITENYVQDSSVDEHDDGN. Transmembrane regions (helical) follow at residues 356–381 and 401–423; these read YILM…APII and GFLA…GAHI.

Belongs to the TMCO4 family.

It localises to the golgi apparatus membrane. This is an uncharacterized protein from Schizosaccharomyces pombe (strain 972 / ATCC 24843) (Fission yeast).